Consider the following 55-residue polypeptide: MAKDKDVRPIIKLKSTAGTGYTYVTRKNRRNDPDRMVLKKYDPRIRKHVEFREER.

It belongs to the bacterial ribosomal protein bL33 family.

This is Large ribosomal subunit protein bL33 from Arthrobacter sp. (strain FB24).